A 96-amino-acid chain; its full sequence is Co-chaperonin GroES (96 aa).

The protein belongs to the GroES chaperonin family. Heptamer of 7 subunits arranged in a ring. Interacts with the chaperonin GroEL.

The protein localises to the cytoplasm. Functionally, together with the chaperonin GroEL, plays an essential role in assisting protein folding. The GroEL-GroES system forms a nano-cage that allows encapsulation of the non-native substrate proteins and provides a physical environment optimized to promote and accelerate protein folding. GroES binds to the apical surface of the GroEL ring, thereby capping the opening of the GroEL channel. The sequence is that of Co-chaperonin GroES from Cupriavidus taiwanensis (strain DSM 17343 / BCRC 17206 / CCUG 44338 / CIP 107171 / LMG 19424 / R1) (Ralstonia taiwanensis (strain LMG 19424)).